Consider the following 206-residue polypeptide: Macrophage immunometabolism regulator (206 aa).

Met-1 carries the N-acetylmethionine modification. Positions 1 to 41 are disordered; that stretch reads MEVDINGESRSTLTTLPFPGAEANSPGKAEAEKPRCSSTPC. A phosphoserine mark is found at Ser-25, Ser-140, and Ser-167.

It belongs to the UNC119-binding protein family. In terms of assembly, interacts with UNC119 and UNC119B; interaction preferentially takes place when UNC119 and UNC119B are unliganded with myristoylated proteins. Phosphorylated. In terms of tissue distribution, high expression in normal macrophages, monocytes, and cultured rheumatoid arthritis synovial fibroblasts (RASFs), with lower expression in B- and T-cells, and little to no expression in other tissues and cell lines.

It localises to the cytoplasm. It is found in the cell projection. The protein localises to the cilium. Its function is as follows. Regulates the macrophage function, by enhancing the resolution of inflammation and wound repair functions mediated by M2 macrophages. The regulation of macrophage function is, due at least in part, to its ability to inhibit glycolysis. May also play a role in trafficking of proteins via its interaction with UNC119 and UNC119B cargo adapters: may help the release of UNC119 and UNC119B cargo or the recycling of UNC119 and UNC119B. May play a role in ciliary membrane localization via its interaction with UNC119B and protein transport into photoreceptor cells. The chain is Macrophage immunometabolism regulator from Homo sapiens (Human).